We begin with the raw amino-acid sequence, 428 residues long: Histidine--tRNA ligase (428 aa).

This sequence belongs to the class-II aminoacyl-tRNA synthetase family. Homodimer.

It localises to the cytoplasm. It catalyses the reaction tRNA(His) + L-histidine + ATP = L-histidyl-tRNA(His) + AMP + diphosphate + H(+). This Sorangium cellulosum (strain So ce56) (Polyangium cellulosum (strain So ce56)) protein is Histidine--tRNA ligase.